The chain runs to 87 residues: MKTFDDLFAELSEKAATRPEGSGTVRELDAGVHSIGKKIVEEAAEVWMAAEHESDEAFAEEASQLIYHLQVMMLAKGLTLADVYRHL.

Belongs to the PRA-PH family.

Its subcellular location is the cytoplasm. The catalysed reaction is 1-(5-phospho-beta-D-ribosyl)-ATP + H2O = 1-(5-phospho-beta-D-ribosyl)-5'-AMP + diphosphate + H(+). Its pathway is amino-acid biosynthesis; L-histidine biosynthesis; L-histidine from 5-phospho-alpha-D-ribose 1-diphosphate: step 2/9. The sequence is that of Phosphoribosyl-ATP pyrophosphatase from Leifsonia xyli subsp. xyli (strain CTCB07).